Consider the following 300-residue polypeptide: N-acetylmuramic acid 6-phosphate etherase 1 (300 aa).

The region spanning 59–222 (AAERFKKGGR…STGIMVKVGN (164 aa)) is the SIS domain. Glutamate 87 (proton donor) is an active-site residue. The active site involves glutamate 118.

Belongs to the GCKR-like family. MurNAc-6-P etherase subfamily. Homodimer.

The catalysed reaction is N-acetyl-D-muramate 6-phosphate + H2O = N-acetyl-D-glucosamine 6-phosphate + (R)-lactate. It functions in the pathway amino-sugar metabolism; N-acetylmuramate degradation. In terms of biological role, specifically catalyzes the cleavage of the D-lactyl ether substituent of MurNAc 6-phosphate, producing GlcNAc 6-phosphate and D-lactate. The polypeptide is N-acetylmuramic acid 6-phosphate etherase 1 (Enterococcus faecalis (strain ATCC 700802 / V583)).